We begin with the raw amino-acid sequence, 312 residues long: Olfactory receptor 5J2 (312 aa).

The Extracellular portion of the chain corresponds to Met-1–Ala-25. Asn-5 carries N-linked (GlcNAc...) asparagine glycosylation. A helical membrane pass occupies residues Val-26 to Ile-46. The Cytoplasmic portion of the chain corresponds to Leu-47 to Lys-54. A helical membrane pass occupies residues Leu-55–Ser-75. The Extracellular segment spans residues Ala-76–Val-99. A disulfide bridge links Cys-97 with Cys-189. Residues Gln-100–Tyr-120 traverse the membrane as a helical segment. Topologically, residues Asp-121–Arg-139 are cytoplasmic. A helical membrane pass occupies residues Lys-140–Thr-160. Topologically, residues Ile-161–Glu-196 are extracellular. The chain crosses the membrane as a helical span at residues Leu-197–Ser-217. Residues Tyr-218–Ala-237 are Cytoplasmic-facing. A helical membrane pass occupies residues Phe-238–Ser-258. Residues Tyr-259–Glu-271 are Extracellular-facing. Residues Lys-272 to Leu-292 form a helical membrane-spanning segment. Residues Arg-293–Cys-312 are Cytoplasmic-facing.

It belongs to the G-protein coupled receptor 1 family.

It is found in the cell membrane. In terms of biological role, odorant receptor. This is Olfactory receptor 5J2 (OR5J2) from Homo sapiens (Human).